The chain runs to 444 residues: Na(+)-translocating NADH-quinone reductase subunit A (444 aa).

It belongs to the NqrA family. In terms of assembly, composed of six subunits; NqrA, NqrB, NqrC, NqrD, NqrE and NqrF.

The catalysed reaction is a ubiquinone + n Na(+)(in) + NADH + H(+) = a ubiquinol + n Na(+)(out) + NAD(+). Its function is as follows. NQR complex catalyzes the reduction of ubiquinone-1 to ubiquinol by two successive reactions, coupled with the transport of Na(+) ions from the cytoplasm to the periplasm. NqrA to NqrE are probably involved in the second step, the conversion of ubisemiquinone to ubiquinol. The protein is Na(+)-translocating NADH-quinone reductase subunit A of Shewanella frigidimarina (strain NCIMB 400).